Reading from the N-terminus, the 353-residue chain is Holliday junction branch migration complex subunit RuvB (353 aa).

The large ATPase domain (RuvB-L) stretch occupies residues alanine 4 to tyrosine 185. Residues isoleucine 24, arginine 25, glycine 66, lysine 69, threonine 70, threonine 71, glutamate 132–phenylalanine 134, arginine 175, tyrosine 185, and arginine 222 contribute to the ATP site. Threonine 70 provides a ligand contact to Mg(2+). The interval asparagine 186–aspartate 256 is small ATPAse domain (RuvB-S). Positions glutamate 259–leucine 353 are head domain (RuvB-H). Positions 295, 314, and 319 each coordinate DNA.

It belongs to the RuvB family. As to quaternary structure, homohexamer. Forms an RuvA(8)-RuvB(12)-Holliday junction (HJ) complex. HJ DNA is sandwiched between 2 RuvA tetramers; dsDNA enters through RuvA and exits via RuvB. An RuvB hexamer assembles on each DNA strand where it exits the tetramer. Each RuvB hexamer is contacted by two RuvA subunits (via domain III) on 2 adjacent RuvB subunits; this complex drives branch migration. In the full resolvosome a probable DNA-RuvA(4)-RuvB(12)-RuvC(2) complex forms which resolves the HJ.

The protein localises to the cytoplasm. It carries out the reaction ATP + H2O = ADP + phosphate + H(+). The RuvA-RuvB-RuvC complex processes Holliday junction (HJ) DNA during genetic recombination and DNA repair, while the RuvA-RuvB complex plays an important role in the rescue of blocked DNA replication forks via replication fork reversal (RFR). RuvA specifically binds to HJ cruciform DNA, conferring on it an open structure. The RuvB hexamer acts as an ATP-dependent pump, pulling dsDNA into and through the RuvAB complex. RuvB forms 2 homohexamers on either side of HJ DNA bound by 1 or 2 RuvA tetramers; 4 subunits per hexamer contact DNA at a time. Coordinated motions by a converter formed by DNA-disengaged RuvB subunits stimulates ATP hydrolysis and nucleotide exchange. Immobilization of the converter enables RuvB to convert the ATP-contained energy into a lever motion, pulling 2 nucleotides of DNA out of the RuvA tetramer per ATP hydrolyzed, thus driving DNA branch migration. The RuvB motors rotate together with the DNA substrate, which together with the progressing nucleotide cycle form the mechanistic basis for DNA recombination by continuous HJ branch migration. Branch migration allows RuvC to scan DNA until it finds its consensus sequence, where it cleaves and resolves cruciform DNA. This chain is Holliday junction branch migration complex subunit RuvB, found in Pseudomonas syringae pv. syringae (strain B728a).